The chain runs to 465 residues: Cyclin-A1 (465 aa).

This sequence belongs to the cyclin family. Cyclin AB subfamily. Interacts with the CDK2 and the CDC2 protein kinases to form a serine/threonine kinase holoenzyme complex. The cyclin subunit imparts substrate specificity to the complex. Does not bind CDK4 and CDK5 (in vitro). The cyclin A1-CDK2 complex interacts with transcription factor E2F-1 and RB proteins. Found in a complex with CDK2, CABLES1 and CCNE1. Interacts with INCA1. Interacts with KLHDC9. In terms of processing, polyubiquitinated via 'Lys-11'-linked ubiquitin by the anaphase-promoting complex (APC/C), leading to its degradation by the proteasome. Deubiquitinated and stabilized by USP37 enables entry into S phase. Ubiquitinated during the G1 phase by the SCF(FBXO31) complex, leading to its proteasomal degradation. In terms of tissue distribution, very high levels in testis and very low levels in brain. Also found in myeloid leukemia cell lines.

The protein localises to the nucleus. Functionally, may be involved in the control of the cell cycle at the G1/S (start) and G2/M (mitosis) transitions. May primarily function in the control of the germline meiotic cell cycle and additionally in the control of mitotic cell cycle in some somatic cells. This Homo sapiens (Human) protein is Cyclin-A1 (CCNA1).